The sequence spans 353 residues: Holliday junction branch migration complex subunit RuvB (353 aa).

The interval 1-25 (MDPGPAGDEVSLAPQQETAEQDVET) is disordered. The tract at residues 1 to 188 (MDPGPAGDEV…FGFTAHMEFY (188 aa)) is large ATPase domain (RuvB-L). ATP contacts are provided by residues L27, R28, G69, K72, T73, S74, 135–137 (EDY), R178, Y188, and R225. A Mg(2+)-binding site is contributed by T73. The small ATPAse domain (RuvB-S) stretch occupies residues 189–259 (EPAELELVVR…VARAALEVYD (71 aa)). Residues 262-353 (EHGLDRLDRA…ATRSLFADEV (92 aa)) form a head domain (RuvB-H) region. Residues R317 and R322 each contribute to the DNA site.

This sequence belongs to the RuvB family. As to quaternary structure, homohexamer. Forms an RuvA(8)-RuvB(12)-Holliday junction (HJ) complex. HJ DNA is sandwiched between 2 RuvA tetramers; dsDNA enters through RuvA and exits via RuvB. An RuvB hexamer assembles on each DNA strand where it exits the tetramer. Each RuvB hexamer is contacted by two RuvA subunits (via domain III) on 2 adjacent RuvB subunits; this complex drives branch migration. In the full resolvosome a probable DNA-RuvA(4)-RuvB(12)-RuvC(2) complex forms which resolves the HJ.

The protein resides in the cytoplasm. It carries out the reaction ATP + H2O = ADP + phosphate + H(+). Its function is as follows. The RuvA-RuvB-RuvC complex processes Holliday junction (HJ) DNA during genetic recombination and DNA repair, while the RuvA-RuvB complex plays an important role in the rescue of blocked DNA replication forks via replication fork reversal (RFR). RuvA specifically binds to HJ cruciform DNA, conferring on it an open structure. The RuvB hexamer acts as an ATP-dependent pump, pulling dsDNA into and through the RuvAB complex. RuvB forms 2 homohexamers on either side of HJ DNA bound by 1 or 2 RuvA tetramers; 4 subunits per hexamer contact DNA at a time. Coordinated motions by a converter formed by DNA-disengaged RuvB subunits stimulates ATP hydrolysis and nucleotide exchange. Immobilization of the converter enables RuvB to convert the ATP-contained energy into a lever motion, pulling 2 nucleotides of DNA out of the RuvA tetramer per ATP hydrolyzed, thus driving DNA branch migration. The RuvB motors rotate together with the DNA substrate, which together with the progressing nucleotide cycle form the mechanistic basis for DNA recombination by continuous HJ branch migration. Branch migration allows RuvC to scan DNA until it finds its consensus sequence, where it cleaves and resolves cruciform DNA. In Saccharopolyspora erythraea (strain ATCC 11635 / DSM 40517 / JCM 4748 / NBRC 13426 / NCIMB 8594 / NRRL 2338), this protein is Holliday junction branch migration complex subunit RuvB.